Consider the following 214-residue polypeptide: Protein get-1 (214 aa).

The Lumenal segment spans residues 1 to 4; the sequence is MPSL. A helical transmembrane segment spans residues 5 to 24; it reads LVVIFVIELFVQLVNTIGAA. The Cytoplasmic segment spans residues 25-110; it reads TINNLLWRIA…KFDRTLTTVR (86 aa). Residues 73–107 are a coiled coil; the sequence is KWARLRRQHDKLLEDLEKRKKELDAAKTKFDRTLT. Residues 111 to 131 form a helical membrane-spanning segment; the sequence is VVATRGLQWFLPFWYSREPMF. Residues 132–155 are Lumenal-facing; it reads WLPYGWFPYYVEWFASFPRAPLGS. The chain crosses the membrane as a helical span at residues 156–172; that stretch reads VSIVVWQWACTGVIKLV. Residues 173 to 214 lie on the Cytoplasmic side of the membrane; it reads IETVMAVVGLIVAARQKQQEKQKAKQAVPAAGGGDSKAEEAK. A disordered region spans residues 190-214; sequence QQEKQKAKQAVPAAGGGDSKAEEAK.

This sequence belongs to the WRB/GET1 family. In terms of assembly, interacts with GET3.

It localises to the endoplasmic reticulum membrane. Required for the post-translational delivery of tail-anchored (TA) proteins to the endoplasmic reticulum. Acts as a membrane receptor for soluble GET3, which recognizes and selectively binds the transmembrane domain of TA proteins in the cytosol. In Neurospora crassa (strain ATCC 24698 / 74-OR23-1A / CBS 708.71 / DSM 1257 / FGSC 987), this protein is Protein get-1 (get-1).